The following is a 243-amino-acid chain: MEHSSNRPEDFPLNVFSVTPYTPSTADIQVSDDDKAGATLLFSGIFLGLVGITFTVMGWIKYQGVSHFEWTQLLGPILLSVGVTFILIAVCKFKMLSCQLCSDNEERVPDSDQTSGGQSFVFTGINQPITFHGATVVQYIPPPYGSQEPLGMNATYLQPMMNPCGLIPPSGAAAAAPSPPQYYTIYPQDNAAFVESEGFSPFVGTGYDRPDSDADQLEGTELEEEDCVCFSPPPYEEIYALPR.

2 consecutive transmembrane segments (helical) span residues 40–60 and 73–93; these read LLFSGIFLGLVGITFTVMGWI and LLGPILLSVGVTFILIAVCKF.

Interacts with SLC34A1; regulates SLC34A1 internalization by PTH and FGF23. In terms of tissue distribution, kidney specific. Expressed in renal primary proximal tubule cells.

The protein resides in the endoplasmic reticulum membrane. It is found in the apical cell membrane. Regulator of plasma phosphate homeostasis. Decreases serum inorganic phosphate (Pi) uptake by regulating the sodium-phosphate cotransporter SLC34A1 trafficking by PTH and FGF23 in the kidney. This Mus musculus (Mouse) protein is Transmembrane protein 174 (Tmem174).